A 69-amino-acid polypeptide reads, in one-letter code: MKAIISLLLISAMVFSMFEAVPVRRRFTAFEGERGCLPHNRFCNALSGPRCCTGLKCKELSIWDSRCLG.

The N-terminal stretch at Met1–Ala20 is a signal peptide. The propeptide occupies Val21–Arg34. Disulfide bonds link Cys36/Cys52, Cys43/Cys57, and Cys51/Cys67. Leu68 bears the Leucine amide mark.

This sequence belongs to the neurotoxin 01 (U2-agtx) family. As to expression, expressed by the venom gland.

It is found in the secreted. Functionally, insect active toxin causing rapid but reversible paralysis in crickets. No activity shown in mammals. Does not show effect on mammalian voltage-gated calcium channels. The chain is U2-agatoxin-Ao1o from Agelena orientalis (Funnel-web spider).